A 248-amino-acid polypeptide reads, in one-letter code: 3-deoxy-manno-octulosonate cytidylyltransferase (248 aa).

This sequence belongs to the KdsB family.

The protein localises to the cytoplasm. It catalyses the reaction 3-deoxy-alpha-D-manno-oct-2-ulosonate + CTP = CMP-3-deoxy-beta-D-manno-octulosonate + diphosphate. It participates in nucleotide-sugar biosynthesis; CMP-3-deoxy-D-manno-octulosonate biosynthesis; CMP-3-deoxy-D-manno-octulosonate from 3-deoxy-D-manno-octulosonate and CTP: step 1/1. It functions in the pathway bacterial outer membrane biogenesis; lipopolysaccharide biosynthesis. Its function is as follows. Activates KDO (a required 8-carbon sugar) for incorporation into bacterial lipopolysaccharide in Gram-negative bacteria. The chain is 3-deoxy-manno-octulosonate cytidylyltransferase from Chlorobium phaeobacteroides (strain BS1).